Here is a 406-residue protein sequence, read N- to C-terminus: Putative colanic acid biosynthesis glycosyltransferase WcaL (406 aa).

It belongs to the glycosyltransferase group 1 family. Glycosyltransferase 4 subfamily.

It functions in the pathway slime biogenesis; slime polysaccharide biosynthesis. This is Putative colanic acid biosynthesis glycosyltransferase WcaL (wcaL) from Escherichia coli (strain K12).